Consider the following 968-residue polypeptide: RNA polymerase-associated protein RapA (968 aa).

The 171-residue stretch at 164–334 (EVGQRHAPRV…FARLRLLDPN (171 aa)) folds into the Helicase ATP-binding domain. 177–184 (DEVGLGKT) contributes to the ATP binding site. The DEAH box signature appears at 280–283 (DEAH). Residues 493-644 (WLVDFLLDLR…TCPTGRALYD (152 aa)) enclose the Helicase C-terminal domain.

The protein belongs to the SNF2/RAD54 helicase family. RapA subfamily. As to quaternary structure, interacts with the RNAP. Has a higher affinity for the core RNAP than for the holoenzyme. Its ATPase activity is stimulated by binding to RNAP.

Functionally, transcription regulator that activates transcription by stimulating RNA polymerase (RNAP) recycling in case of stress conditions such as supercoiled DNA or high salt concentrations. Probably acts by releasing the RNAP, when it is trapped or immobilized on tightly supercoiled DNA. Does not activate transcription on linear DNA. Probably not involved in DNA repair. This is RNA polymerase-associated protein RapA from Sodalis glossinidius (strain morsitans).